The sequence spans 234 residues: tRNA (guanine-N(1)-)-methyltransferase (234 aa).

S-adenosyl-L-methionine contacts are provided by residues glycine 115 and 135–140 (VGDYIL).

Belongs to the RNA methyltransferase TrmD family. In terms of assembly, homodimer.

The protein resides in the cytoplasm. The catalysed reaction is guanosine(37) in tRNA + S-adenosyl-L-methionine = N(1)-methylguanosine(37) in tRNA + S-adenosyl-L-homocysteine + H(+). In terms of biological role, specifically methylates guanosine-37 in various tRNAs. In Rickettsia typhi (strain ATCC VR-144 / Wilmington), this protein is tRNA (guanine-N(1)-)-methyltransferase.